The sequence spans 206 residues: Large ribosomal subunit protein uL4 (206 aa).

The tract at residues 43–78 (ARSGNRKQKDREEVKHTTKKPWRQKGTGRARAGMSS) is disordered. The span at 49–58 (KQKDREEVKH) shows a compositional bias: basic and acidic residues. A compositionally biased stretch (basic residues) spans 59–70 (TTKKPWRQKGTG).

This sequence belongs to the universal ribosomal protein uL4 family. As to quaternary structure, part of the 50S ribosomal subunit.

In terms of biological role, one of the primary rRNA binding proteins, this protein initially binds near the 5'-end of the 23S rRNA. It is important during the early stages of 50S assembly. It makes multiple contacts with different domains of the 23S rRNA in the assembled 50S subunit and ribosome. Forms part of the polypeptide exit tunnel. The chain is Large ribosomal subunit protein uL4 from Cupriavidus pinatubonensis (strain JMP 134 / LMG 1197) (Cupriavidus necator (strain JMP 134)).